Consider the following 203-residue polypeptide: Ribonuclease HII (203 aa).

The RNase H type-2 domain occupies 18–203; sequence GQYAGVDEVG…SFRPVREALA (186 aa). Positions 24, 25, and 116 each coordinate a divalent metal cation.

Belongs to the RNase HII family. Requires Mn(2+) as cofactor. Mg(2+) is required as a cofactor.

Its subcellular location is the cytoplasm. The enzyme catalyses Endonucleolytic cleavage to 5'-phosphomonoester.. In terms of biological role, endonuclease that specifically degrades the RNA of RNA-DNA hybrids. In Shewanella pealeana (strain ATCC 700345 / ANG-SQ1), this protein is Ribonuclease HII.